A 284-amino-acid chain; its full sequence is MATFIRFTAPLFCFFFLFSLFSHQTMSQPQHMATFCDDRLSDNFTQTSSYKANRETLLSSLRDRSSLGTYSNATIGLSPDTVYGMFLCRGDLTKTSCSDCVKTATLEITKNNNCTSRKTALIFYEECMVRYSNVSFFTLVELDGPYVAKYSLATFPTSLFSSFQQTLSNKVEQLIILIASKSSLSASTPYYVKDISRVNELEGSYTLDTVVQCSPDLDPANCGVCLRLVVKGLSGCCTNARFAQFYLSKCFLKYDTTGLPTSQSPSGSSSINVMKGEHNICPRL.

Positions methionine 1–serine 27 are cleaved as a signal peptide. Gnk2-homologous domains are found at residues methionine 32–phenylalanine 136 and serine 151–leucine 259.

It belongs to the cysteine-rich repeat secretory protein family.

It localises to the secreted. The protein is Cysteine-rich repeat secretory protein 8 (CRRSP8) of Arabidopsis thaliana (Mouse-ear cress).